The chain runs to 426 residues: UPF0597 protein CLB_1750 (426 aa).

The protein belongs to the UPF0597 family.

The sequence is that of UPF0597 protein CLB_1750 from Clostridium botulinum (strain ATCC 19397 / Type A).